A 923-amino-acid chain; its full sequence is Probable dipeptidyl-aminopeptidase B (923 aa).

The span at 1 to 16 shows a compositional bias: basic and acidic residues; it reads MATEKGHGRDDEERVP. The disordered stretch occupies residues 1 to 21; the sequence is MATEKGHGRDDEERVPLTRGS. Residues 1 to 99 lie on the Cytoplasmic side of the membrane; that stretch reads MATEKGHGRD…KPMHKSVKIA (99 aa). A helical; Signal-anchor for type II membrane protein membrane pass occupies residues 100–120; the sequence is LWTLLFLSLGGWSLAFVLFIF. Topologically, residues 121–923 are vacuolar; the sequence is RSHDTYETPI…GLSYNFKHLH (803 aa). 3 N-linked (GlcNAc...) asparagine glycosylation sites follow: Asn135, Asn351, and Asn574. The Charge relay system role is filled by Ser756. Asn815 carries N-linked (GlcNAc...) asparagine glycosylation. Catalysis depends on charge relay system residues Asp833 and His866. Asn902 is a glycosylation site (N-linked (GlcNAc...) asparagine).

This sequence belongs to the peptidase S9B family.

It localises to the vacuole membrane. The enzyme catalyses Release of an N-terminal dipeptide, Xaa-Yaa-|-Zaa-, from a polypeptide, preferentially when Yaa is Pro, provided Zaa is neither Pro nor hydroxyproline.. Type IV dipeptidyl-peptidase which removes N-terminal dipeptides sequentially from polypeptides having unsubstituted N-termini provided that the penultimate residue is proline. This is Probable dipeptidyl-aminopeptidase B (DAPB) from Ajellomyces capsulatus (strain G186AR / H82 / ATCC MYA-2454 / RMSCC 2432) (Darling's disease fungus).